Reading from the N-terminus, the 1136-residue chain is DNA-directed RNA polymerase I subunit RPA2 (1136 aa).

The interval 1–24 (MDPGSRWRNLPSGPSLKHLTDPSY) is disordered. Arg-180 provides a ligand contact to RNA. Positions 194–208 (VRPKWKTRGPGYTHY) are loop B. Positions 236–247 (LNFIYRKELFFL) are loop A. Position 367 (Asp-367) interacts with RNA. Fork loop stretches follow at residues 439 to 453 (LRSKTGLGLLQDSGL) and 474 to 489 (RGADFAKMRTTTVRRL). Lys-890 contacts RNA. DNA is bound by residues Arg-1020 and Arg-1036. Position 1051 is a phosphoserine (Ser-1051). Positions 1071, 1074, 1099, and 1102 each coordinate Zn(2+). The segment at 1071 to 1102 (CVKCGSLLSPLLEKPPPSWSAMRNRKYNCTLC) adopts a C4-type zinc-finger fold.

The protein belongs to the RNA polymerase beta chain family. Component of the RNA polymerase I (Pol I) complex consisting of 13 subunits: a ten-subunit catalytic core composed of POLR1A/RPA1, POLR1B/RPA2, POLR1C/RPAC1, POLR1D/RPAC2, POLR1H/RPA12, POLR2E/RPABC1, POLR2F/RPABC2, POLR2H/RPABC3, POLR2K/RPABC4 and POLR2L/RPABC5; a mobile stalk subunit POLR1F/RPA43 protruding from the core and additional subunits homologous to general transcription factors POLR1E/RPA49 and POLR1G/RPA34. Part of Pol I pre-initiation complex (PIC), in which Pol I core assembles with RRN3 and promoter-bound UTBF and SL1/TIF-IB complex.

The protein localises to the nucleus. Its subcellular location is the nucleolus. It localises to the chromosome. It catalyses the reaction RNA(n) + a ribonucleoside 5'-triphosphate = RNA(n+1) + diphosphate. In terms of biological role, catalytic core component of RNA polymerase I (Pol I), a DNA-dependent RNA polymerase which synthesizes ribosomal RNA precursors using the four ribonucleoside triphosphates as substrates. Transcribes 47S pre-rRNAs from multicopy rRNA gene clusters, giving rise to 5.8S, 18S and 28S ribosomal RNAs. Pol I-mediated transcription cycle proceeds through transcription initiation, transcription elongation and transcription termination stages. During transcription initiation, Pol I pre-initiation complex (PIC) is recruited by the selectivity factor 1 (SL1/TIF-IB) complex bound to the core promoter that precedes an rDNA repeat unit. The PIC assembly bends the promoter favoring the formation of the transcription bubble and promoter escape. Once the polymerase has escaped from the promoter it enters the elongation phase during which RNA is actively polymerized, based on complementarity with the template DNA strand. Highly processive, assembles in structures referred to as 'Miller trees' where many elongating Pol I complexes queue and transcribe the same rDNA coding regions. At terminator sequences downstream of the rDNA gene, PTRF interacts with Pol I and halts Pol I transcription leading to the release of the RNA transcript and polymerase from the DNA. Forms Pol I active center together with the largest subunit POLR1A/RPA1. Appends one nucleotide at a time to the 3' end of the nascent RNA, with POLR1A/RPA1 contributing a Mg(2+)-coordinating DxDGD motif, and POLR1B/RPA2 providing lysine residues believed to facilitate Watson-Crick base pairing between the incoming nucleotide and the template base. Typically, Mg(2+) ions direct a 5' nucleoside triphosphate to form a phosphodiester bond with the 3' hydroxyl of the preceding nucleotide of the nascent RNA, with the elimination of pyrophosphate. Has proofreading activity: Pauses and backtracks to allow the cleavage of a missincorporated nucleotide via POLR1H/RPA12. High Pol I processivity is associated with decreased transcription fidelity. The sequence is that of DNA-directed RNA polymerase I subunit RPA2 (POLR1B) from Pongo abelii (Sumatran orangutan).